Here is a 465-residue protein sequence, read N- to C-terminus: MAELDKIEVRDITRIERIGAHSHIRGLGLDDVLEARAVSQGMVGQKDARRAAGLVVQIVREGKIAGRCILLAGEPSTGKTAIAVGMAQALGNETPFTSMSGSEIYSLEMNKTEALSQALRKSIGVRIKEETEIIEGEVVEIQIDRPASGTGQKVGKVTIKTTDMETNYDLGNKIIECFMKEKIQAGDVITIDKASGKVSKLGRSFTRARDYDATGAQTRFVQCPEGELQKRKEVVHTVTLHEIDVINSRTHGFLALFAGDTGEIKQEVRDQINSKVMEWREEGKAEINPGVLFIDEAHMLDIECFSFLNRALESDMAPVVIMATNRGITKIRGTNYRSPHGIPIDLLDRMIIIRTVPYSAKEIKEILKIRCEEEDCQINNEALMVLGRIATETSLRYAIQSITTASLVSKRRKAAEITVEDIRKVYSLFLDEKRSSKIMKEYQDEYLFYDDSLSQAEQAMEVETN.

73-80 lines the ATP pocket; it reads GEPSTGKT.

Belongs to the RuvB family. Forms homohexameric rings. May form a dodecamer with pont made of two stacked hexameric rings. Component of the chromatin remodeling Ino80 complex.

Its subcellular location is the nucleus. The catalysed reaction is ATP + H2O = ADP + phosphate + H(+). Functionally, acts as a transcriptional coactivator in Wg signaling. Proposed core component of the chromatin remodeling Ino80 complex which is involved in transcriptional regulation, DNA replication and probably DNA repair. This chain is RuvB-like helicase 2, found in Aedes aegypti (Yellowfever mosquito).